A 340-amino-acid chain; its full sequence is Dihydroorotate dehydrogenase (quinone) (340 aa).

FMN-binding positions include 63-67 and threonine 87; that span reads AGLDK. Lysine 67 provides a ligand contact to substrate. 112–116 is a binding site for substrate; that stretch reads NRMGF. Residues asparagine 140 and asparagine 173 each coordinate FMN. Asparagine 173 is a binding site for substrate. Serine 176 functions as the Nucleophile in the catalytic mechanism. Substrate is bound at residue asparagine 178. Residues lysine 218 and threonine 246 each coordinate FMN. 247–248 contributes to the substrate binding site; the sequence is NT. Residues glycine 269, glycine 298, and 319-320 contribute to the FMN site; that span reads YT.

This sequence belongs to the dihydroorotate dehydrogenase family. Type 2 subfamily. In terms of assembly, monomer. Requires FMN as cofactor.

The protein resides in the cell membrane. It catalyses the reaction (S)-dihydroorotate + a quinone = orotate + a quinol. The protein operates within pyrimidine metabolism; UMP biosynthesis via de novo pathway; orotate from (S)-dihydroorotate (quinone route): step 1/1. Its function is as follows. Catalyzes the conversion of dihydroorotate to orotate with quinone as electron acceptor. This Methylococcus capsulatus (strain ATCC 33009 / NCIMB 11132 / Bath) protein is Dihydroorotate dehydrogenase (quinone).